Here is a 957-residue protein sequence, read N- to C-terminus: Glycine dehydrogenase (decarboxylating) (957 aa).

Residue Lys708 is modified to N6-(pyridoxal phosphate)lysine.

This sequence belongs to the GcvP family. In terms of assembly, the glycine cleavage system is composed of four proteins: P, T, L and H. Pyridoxal 5'-phosphate serves as cofactor.

The catalysed reaction is N(6)-[(R)-lipoyl]-L-lysyl-[glycine-cleavage complex H protein] + glycine + H(+) = N(6)-[(R)-S(8)-aminomethyldihydrolipoyl]-L-lysyl-[glycine-cleavage complex H protein] + CO2. The glycine cleavage system catalyzes the degradation of glycine. The P protein binds the alpha-amino group of glycine through its pyridoxal phosphate cofactor; CO(2) is released and the remaining methylamine moiety is then transferred to the lipoamide cofactor of the H protein. In Salmonella heidelberg (strain SL476), this protein is Glycine dehydrogenase (decarboxylating).